Reading from the N-terminus, the 257-residue chain is Gasdermin-like protein rcd-1-1 (257 aa).

Belongs to the gasdermin family. In terms of assembly, heterooligomer; the heterooligomer with rcd-1-2 forms a ring-shaped pore complex when inserted in the membrane.

The protein localises to the cytoplasm. The protein resides in the cell membrane. In terms of biological role, gasdermin-like protein involved in heterokaryon incompatibility, a process that ensures that during spontaneous vegetative cell fusion, only compatible cells from the same colony survive (non-self-recognition). In N.crassa, the rcd-1 locus exists as 2 incompatible alleles, rcd-1-1 (this entry) and rcd-1-2 (AC P0DW10). During the allorecognition process, forms a heterooligomer with rcd-1-2, thereby forming a functional gasdermin-like complex that binds to membranes and forms pores, triggering cell death. Binds negatively charged phospholipids, such as cardiolipin and phosphatidylserine. Also binds to phosphoinositides, preferentially to phosphatidylinositol-3-phosphate (PtdIns-3-P), PtdIns-5-P and PtdIns-3,5-P2. The chain is Gasdermin-like protein rcd-1-1 from Neurospora crassa (strain ATCC 24698 / 74-OR23-1A / CBS 708.71 / DSM 1257 / FGSC 987).